The primary structure comprises 581 residues: UvrABC system protein C (581 aa).

In terms of domain architecture, GIY-YIG spans 15–94 (REPGVYLFEQ…IKRHRPPYNV (80 aa)). In terms of domain architecture, UVR spans 202-237 (GVLADPLRREMEAAAQNQEFERAANLRDKLGAVEAL).

This sequence belongs to the UvrC family. In terms of assembly, interacts with UvrB in an incision complex.

The protein localises to the cytoplasm. In terms of biological role, the UvrABC repair system catalyzes the recognition and processing of DNA lesions. UvrC both incises the 5' and 3' sides of the lesion. The N-terminal half is responsible for the 3' incision and the C-terminal half is responsible for the 5' incision. The sequence is that of UvrABC system protein C from Haloarcula marismortui (strain ATCC 43049 / DSM 3752 / JCM 8966 / VKM B-1809) (Halobacterium marismortui).